We begin with the raw amino-acid sequence, 272 residues long: Acetylglutamate kinase (272 aa).

Substrate is bound by residues 46–47, arginine 68, and asparagine 166; that span reads GA.

It belongs to the acetylglutamate kinase family. ArgB subfamily.

It is found in the cytoplasm. It catalyses the reaction N-acetyl-L-glutamate + ATP = N-acetyl-L-glutamyl 5-phosphate + ADP. The protein operates within amino-acid biosynthesis; L-arginine biosynthesis; N(2)-acetyl-L-ornithine from L-glutamate: step 2/4. Functionally, catalyzes the ATP-dependent phosphorylation of N-acetyl-L-glutamate. The sequence is that of Acetylglutamate kinase from Dehalococcoides mccartyi (strain ATCC BAA-2266 / KCTC 15142 / 195) (Dehalococcoides ethenogenes (strain 195)).